A 219-amino-acid polypeptide reads, in one-letter code: Inner membrane protein YghB (219 aa).

At 1–17 (MAVIQDIIAALWQHDFA) the chain is on the cytoplasmic side. The chain crosses the membrane as a helical span at residues 18–38 (ALADPHIVSVVYFVMFATLFL). The Periplasmic segment spans residues 39-67 (ENGLLPASFLPGDSLLILAGALIAQGVMD). The chain crosses the membrane as a helical span at residues 68-88 (FLPTIAILTAAASLGCWLSYI). Over 89–160 (QGRWLGNTKT…RRFQFFNWLS (72 aa)) the chain is Cytoplasmic. A helical transmembrane segment spans residues 161–181 (GLLWVSVVTSFGYALSMIPFV). Over 182-191 (KRHEDQVMTF) the chain is Periplasmic. Residues 192–212 (LMILPIALLTAGLLGTLFVVI) traverse the membrane as a helical segment. The Cytoplasmic portion of the chain corresponds to 213–219 (KKKYCNA).

It belongs to the DedA family.

It is found in the cell inner membrane. The chain is Inner membrane protein YghB (yghB) from Escherichia coli O6:H1 (strain CFT073 / ATCC 700928 / UPEC).